The primary structure comprises 483 residues: Type 2 glycosyltransferase (483 aa).

Residues 21–41 traverse the membrane as a helical segment; the sequence is AVVYLSALFTPWFTAFCVLWL. A Dxd motif motif is present at residues 156 to 158; it reads DDD. The QxxxRW motif motif lies at 301–305; that stretch reads QCSRW. Residue N313 is glycosylated (N-linked (GlcNAc...) asparagine). 3 helical membrane passes run 336–356, 369–389, and 396–416; these read IATF…ALWW, AIYA…VGLF, and IMFL…KIYA. A glycan (N-linked (GlcNAc...) asparagine) is linked at N421.

The protein belongs to the GT2 glycosyltransferase family.

The protein localises to the cell membrane. Its function is as follows. Glycosyltransferase that plays an important role in infection-related morphogenesis and pathogenesis. Involved in stress tolerance and hyphal hydrophobicity via its regulation of the expression of nydrophobin MPG1. May regulate growth, pathogenicity, and cell wall integrity (CWI) through glycosylation of heat shock protein SSB1, and other (unidentified) substrates may contribute to conidiation. Candidate proteins as potential substrates of GT2 include several heat shock proteins (SSB1/MGG_02503, MGG_06759 and MGG_06958), two coiled-coil domain-containing proteins (MGG_04321 and MGG_09571), aminopeptidase 2 (MGG_16472), and a nuclease domain-containing protein (MGG_12646). In Pyricularia oryzae (strain 70-15 / ATCC MYA-4617 / FGSC 8958) (Rice blast fungus), this protein is Type 2 glycosyltransferase.